A 118-amino-acid polypeptide reads, in one-letter code: Non-specific lipid-transfer protein 2A (118 aa).

A signal peptide spans 1–26 (MARAQLVLVALVAAALLLAGPHTTMA). 4 cysteine pairs are disulfide-bonded: C30-C77, C40-C54, C55-C100, and C75-C114.

This sequence belongs to the plant LTP family.

Its function is as follows. Plant non-specific lipid-transfer proteins transfer phospholipids as well as galactolipids across membranes. May play a role in wax or cutin deposition in the cell walls of expanding epidermal cells and certain secretory tissues. The sequence is that of Non-specific lipid-transfer protein 2A (LTP2-A) from Oryza sativa subsp. japonica (Rice).